The following is a 410-amino-acid chain: ACT domain-containing protein ACR10 (410 aa).

ACT domains are found at residues 22 to 105, 114 to 197, and 245 to 324; these read VITI…SESQ, LLKL…LVGP, and LIHI…VVMM.

In terms of biological role, may bind amino acids. This Arabidopsis thaliana (Mouse-ear cress) protein is ACT domain-containing protein ACR10.